Consider the following 268-residue polypeptide: Undecaprenyl-diphosphatase (268 aa).

7 consecutive transmembrane segments (helical) span residues 43-63 (FWNT…VVIY), 83-103 (FVIG…IAGK), 109-129 (LFNP…LMWV), 144-164 (FPLP…IPGV), 184-204 (AAEF…AYDF), 218-238 (IVAI…KAFL), and 246-266 (FTFF…ALAL).

It belongs to the UppP family.

Its subcellular location is the cell inner membrane. It carries out the reaction di-trans,octa-cis-undecaprenyl diphosphate + H2O = di-trans,octa-cis-undecaprenyl phosphate + phosphate + H(+). Functionally, catalyzes the dephosphorylation of undecaprenyl diphosphate (UPP). Confers resistance to bacitracin. In Nitrobacter hamburgensis (strain DSM 10229 / NCIMB 13809 / X14), this protein is Undecaprenyl-diphosphatase.